Consider the following 155-residue polypeptide: Ribosomal RNA large subunit methyltransferase H (155 aa).

Residues Gly-104 and 123-128 (FGNITL) contribute to the S-adenosyl-L-methionine site.

This sequence belongs to the RNA methyltransferase RlmH family. In terms of assembly, homodimer.

Its subcellular location is the cytoplasm. It carries out the reaction pseudouridine(1915) in 23S rRNA + S-adenosyl-L-methionine = N(3)-methylpseudouridine(1915) in 23S rRNA + S-adenosyl-L-homocysteine + H(+). In terms of biological role, specifically methylates the pseudouridine at position 1915 (m3Psi1915) in 23S rRNA. The protein is Ribosomal RNA large subunit methyltransferase H of Mesoplasma florum (strain ATCC 33453 / NBRC 100688 / NCTC 11704 / L1) (Acholeplasma florum).